Reading from the N-terminus, the 1805-residue chain is Cytadherence high molecular weight protein 2 (1805 aa).

Coiled coils occupy residues 28–838 (EKNR…NNAF), 914–1591 (ELKI…LRTQ), 1632–1723 (DNTL…QHNT), and 1777–1804 (NITKQQQIAQLNAEINNIKRLIAQKAAS).

Its function is as follows. Component of the cytoskeleton-like structure which stabilizes the shape of the wall-less Mycoplasma. This cytoskeleton-like network of accessory proteins containing HMW proteins 1 to 5 allows the proper anchoring of cytadhesin proteins in the mycoplasmal membrane at the attachment organelle. The sequence is that of Cytadherence high molecular weight protein 2 (hmw2) from Mycoplasma genitalium (strain ATCC 33530 / DSM 19775 / NCTC 10195 / G37) (Mycoplasmoides genitalium).